The following is a 149-amino-acid chain: MSQTHRILLLNGPNLNMLGAREPKHYGSISLASIEEKIQTLATQHNVKVECFQANSEEKLINKIHESFQQVDFILINPAAYTHTSVALRDALLAVSIPFVEIHLSNVHKREPFRHHSYFSDVAEGVICGLGAKGYEFAFLFAIDYLAKK.

The active-site Proton acceptor is Tyr26. Substrate-binding residues include Asn77, His83, and Asp90. Catalysis depends on His103, which acts as the Proton donor. Residues 104-105 (LS) and Arg114 each bind substrate.

The protein belongs to the type-II 3-dehydroquinase family. As to quaternary structure, homododecamer.

The catalysed reaction is 3-dehydroquinate = 3-dehydroshikimate + H2O. Its pathway is metabolic intermediate biosynthesis; chorismate biosynthesis; chorismate from D-erythrose 4-phosphate and phosphoenolpyruvate: step 3/7. Catalyzes a trans-dehydration via an enolate intermediate. The polypeptide is 3-dehydroquinate dehydratase (Haemophilus influenzae (strain 86-028NP)).